The sequence spans 215 residues: Cytidylate kinase (215 aa).

Residue 10-18 (GPAASGKGT) coordinates ATP.

Belongs to the cytidylate kinase family. Type 1 subfamily.

Its subcellular location is the cytoplasm. It catalyses the reaction CMP + ATP = CDP + ADP. The catalysed reaction is dCMP + ATP = dCDP + ADP. The protein is Cytidylate kinase of Bartonella bacilliformis (strain ATCC 35685 / KC583 / Herrer 020/F12,63).